The sequence spans 211 residues: Small ribosomal subunit protein uS4 (211 aa).

Positions 27-48 are disordered; the sequence is GRKVLERRGSQPPGQHGASVRR. The 64-residue stretch at 99 to 162 folds into the S4 RNA-binding domain; it reads RRLDNVVFRL…RKRDYFKDLE (64 aa).

The protein belongs to the universal ribosomal protein uS4 family. Part of the 30S ribosomal subunit. Contacts protein S5. The interaction surface between S4 and S5 is involved in control of translational fidelity.

One of the primary rRNA binding proteins, it binds directly to 16S rRNA where it nucleates assembly of the body of the 30S subunit. Functionally, with S5 and S12 plays an important role in translational accuracy. This is Small ribosomal subunit protein uS4 from Herpetosiphon aurantiacus (strain ATCC 23779 / DSM 785 / 114-95).